The chain runs to 509 residues: Dihydrolipoyl dehydrogenase, mitochondrial (509 aa).

Residues 1 to 35 constitute a mitochondrion transit peptide; the sequence is MQSWSRVYCSLVKRGHFSRISHGLQGVSVVPLRTY. Lys-66 carries the N6-acetyllysine; alternate modification. At Lys-66 the chain carries N6-succinyllysine; alternate. Residues 71-80 and Lys-89 contribute to the FAD site; that span reads EKNETLGGTC. Residues Cys-80 and Cys-85 are joined by a disulfide bond. Lys-104, Lys-122, Lys-132, and Lys-143 each carry N6-acetyllysine; alternate. 4 positions are modified to N6-succinyllysine; alternate: Lys-104, Lys-122, Lys-132, and Lys-143. Residue Gly-154 participates in FAD binding. N6-succinyllysine occurs at positions 159 and 166. Residue 183-185 participates in FAD binding; sequence TGS. NAD(+)-binding positions include 220–227 and Glu-243; that span reads GAGVIGVE. Residues Lys-273 and Lys-277 each carry the N6-succinyllysine modification. Val-278 is a binding site for NAD(+). 2 positions are modified to phosphoserine: Ser-285 and Ser-297. Gly-314 lines the NAD(+) pocket. An N6-acetyllysine modification is found at Lys-346. Residues Asp-355 and 361–364 contribute to the FAD site; that span reads MLAH. Lys-410 carries the N6-acetyllysine; alternate modification. Lys-410 carries the post-translational modification N6-succinyllysine; alternate. N6-acetyllysine is present on residues Lys-417 and Lys-420. Lys-430 carries the post-translational modification N6-succinyllysine. His-487 acts as the Proton acceptor in catalysis. Lys-505 carries the N6-acetyllysine; alternate modification. Lys-505 is modified (N6-succinyllysine; alternate).

The protein belongs to the class-I pyridine nucleotide-disulfide oxidoreductase family. Homodimer. Part of the multimeric pyruvate dehydrogenase complex that contains multiple copies of pyruvate dehydrogenase (subunits PDHA (PDHA1 or PDHA2) and PDHB, E1), dihydrolipoamide acetyltransferase (DLAT, E2) and lipoamide dehydrogenase (DLD, E3). These subunits are bound to an inner core composed of about 48 DLAT and 12 PDHX molecules (by non covalent bonds). The 2-oxoglutarate dehydrogenase complex is composed of OGDH (2-oxoglutarate dehydrogenase; E1), DLST (dihydrolipoamide succinyltransferase; E2), DLD (dihydrolipoamide dehydrogenase; E3) and the assembly factor KGD4. It contains multiple copies of the three enzymatic components (E1, E2 and E3). In the nucleus, the 2-oxoglutarate dehydrogenase complex associates with KAT2A. Interacts with PDHX. FAD serves as cofactor. In terms of processing, tyrosine phosphorylated.

It is found in the mitochondrion matrix. The protein localises to the nucleus. The protein resides in the cell projection. Its subcellular location is the cilium. It localises to the flagellum. It is found in the cytoplasmic vesicle. The protein localises to the secretory vesicle. The protein resides in the acrosome. It carries out the reaction N(6)-[(R)-dihydrolipoyl]-L-lysyl-[protein] + NAD(+) = N(6)-[(R)-lipoyl]-L-lysyl-[protein] + NADH + H(+). Its function is as follows. Lipoamide dehydrogenase is a component of the glycine cleavage system as well as an E3 component of three alpha-ketoacid dehydrogenase complexes (pyruvate-, alpha-ketoglutarate-, and branched-chain amino acid-dehydrogenase complex). The 2-oxoglutarate dehydrogenase complex is mainly active in the mitochondrion. A fraction of the 2-oxoglutarate dehydrogenase complex also localizes in the nucleus and is required for lysine succinylation of histones: associates with KAT2A on chromatin and provides succinyl-CoA to histone succinyltransferase KAT2A. In monomeric form may have additional moonlighting function as serine protease. Involved in the hyperactivation of spermatazoa during capacitation and in the spermatazoal acrosome reaction. In Bos taurus (Bovine), this protein is Dihydrolipoyl dehydrogenase, mitochondrial (DLD).